A 78-amino-acid chain; its full sequence is MSDSAEKVKKIVVEHLGVEADKVTEEASFIDDLGADSLDIVELVMAFEEEFGVEIPDDAAEKIATVKDAIDYIEANKG.

Positions Ser-2–Lys-77 constitute a Carrier domain. The residue at position 37 (Ser-37) is an O-(pantetheine 4'-phosphoryl)serine.

This sequence belongs to the acyl carrier protein (ACP) family. 4'-phosphopantetheine is transferred from CoA to a specific serine of apo-ACP by AcpS. This modification is essential for activity because fatty acids are bound in thioester linkage to the sulfhydryl of the prosthetic group.

Its subcellular location is the cytoplasm. The protein operates within lipid metabolism; fatty acid biosynthesis. Carrier of the growing fatty acid chain in fatty acid biosynthesis. The sequence is that of Acyl carrier protein from Sphingopyxis alaskensis (strain DSM 13593 / LMG 18877 / RB2256) (Sphingomonas alaskensis).